The sequence spans 370 residues: Proto-oncogene Wnt-1 (370 aa).

The first 27 residues, 1–27 (MGLWALLPSWVSTTLLLALTALPAALA), serve as a signal peptide directing secretion. Asparagine 29 carries an N-linked (GlcNAc...) asparagine glycan. 11 disulfide bridges follow: cysteine 93–cysteine 104, cysteine 143–cysteine 151, cysteine 153–cysteine 170, cysteine 218–cysteine 232, cysteine 220–cysteine 227, cysteine 299–cysteine 330, cysteine 315–cysteine 325, cysteine 329–cysteine 369, cysteine 345–cysteine 360, cysteine 347–cysteine 357, and cysteine 352–cysteine 353. Serine 224 carries O-palmitoleoyl serine; by PORCN lipidation. 2 N-linked (GlcNAc...) asparagine glycosylation sites follow: asparagine 316 and asparagine 346. N-linked (GlcNAc...) asparagine glycosylation occurs at asparagine 359.

Belongs to the Wnt family. Forms a soluble 1:1 complex with AFM; this prevents oligomerization and is required for prolonged biological activity. The complex with AFM may represent the physiological form in body fluids. Interacts with PORCN. Interacts with RSPO1, RSPO2 and RSPO3. Interacts with WLS. In terms of processing, palmitoleoylation is required for efficient binding to frizzled receptors. Palmitoleoylation is necessary for proper trafficking to cell surface. Depalmitoleoylated by NOTUM, leading to inhibit Wnt signaling pathway. In terms of tissue distribution, testis and mid-gestational embryos. In the testis, detected only in postmeiotic germ cells undergoing differentiation from round spermatids into mature spermatozoa. In the embryos, expression is restricted to the developing CNS in regions of the neural tube other than the telencephalon. Expressed in osteoblast; expression levels increase with advancing osteoblast differentiation. Expressed in the brain, femur, spleen, and hematopoietic bone marrow.

It localises to the secreted. The protein resides in the extracellular space. The protein localises to the extracellular matrix. Ligand for members of the frizzled family of seven transmembrane receptors. Acts in the canonical Wnt signaling pathway by promoting beta-catenin-dependent transcriptional activation. In some developmental processes, is also a ligand for the coreceptor RYK, thus triggering Wnt signaling. Plays an essential role in the development of the embryonic brain and central nervous system (CNS). Has a role in osteoblast function, bone development and bone homeostasis. The sequence is that of Proto-oncogene Wnt-1 (Wnt1) from Mus musculus (Mouse).